We begin with the raw amino-acid sequence, 79 residues long: Protein FAM236C (79 aa).

Residues 19-48 (KGPQKDPEELVAVSDTAEDPSSGTGLPREP) form a disordered region.

It belongs to the FAM236 family.

The sequence is that of Protein FAM236C from Homo sapiens (Human).